A 330-amino-acid chain; its full sequence is Protoheme IX farnesyltransferase (330 aa).

Helical transmembrane passes span 33–53 (VMTLVVFTAFAGLIAAPVDAD), 54–74 (PFLAFMSILCLAVGAGAAGAL), 101–121 (VSNAYGFGVVASILSVLLMAL), 126–146 (LAAGLLAFSIFFYAVIYTMIL), 154–174 (IVIGGAAGAFPPMIGWVAATG), 180–200 (AVILFMIIFLWTPPHSWALAL), 227–247 (ILLYSIVLVIFAGAPVLTGLG), 250–270 (VYGATSLGGGALFLLLAWRIF), and 308–328 (VLFAALIVEHAFGAYVAIPGV).

It belongs to the UbiA prenyltransferase family. Protoheme IX farnesyltransferase subfamily. In terms of assembly, interacts with CtaA.

It is found in the cell inner membrane. The enzyme catalyses heme b + (2E,6E)-farnesyl diphosphate + H2O = Fe(II)-heme o + diphosphate. It participates in porphyrin-containing compound metabolism; heme O biosynthesis; heme O from protoheme: step 1/1. Converts heme B (protoheme IX) to heme O by substitution of the vinyl group on carbon 2 of heme B porphyrin ring with a hydroxyethyl farnesyl side group. The protein is Protoheme IX farnesyltransferase of Maricaulis maris (strain MCS10) (Caulobacter maris).